A 386-amino-acid chain; its full sequence is Phosphoglycerate kinase (386 aa).

Substrate contacts are provided by residues 21-23, Arg-36, 59-62, Arg-113, and Arg-146; these read DLN and HLGR. Residues Lys-197, Glu-314, and 340-343 contribute to the ATP site; that span reads GGDT.

It belongs to the phosphoglycerate kinase family. Monomer.

The protein localises to the cytoplasm. The enzyme catalyses (2R)-3-phosphoglycerate + ATP = (2R)-3-phospho-glyceroyl phosphate + ADP. The protein operates within carbohydrate degradation; glycolysis; pyruvate from D-glyceraldehyde 3-phosphate: step 2/5. This Vibrio campbellii (strain ATCC BAA-1116) protein is Phosphoglycerate kinase.